Here is a 539-residue protein sequence, read N- to C-terminus: Probable glycerol kinase (539 aa).

Substrate is bound at residue T12. Residue R16 coordinates ATP. 3 residues coordinate substrate: R86, Y168, and D285. Residues T307, G352, and 453–457 (GMAKN) each bind ATP.

It belongs to the FGGY kinase family.

The enzyme catalyses glycerol + ATP = sn-glycerol 3-phosphate + ADP + H(+). It participates in polyol metabolism; glycerol degradation via glycerol kinase pathway; sn-glycerol 3-phosphate from glycerol: step 1/1. In Dictyostelium discoideum (Social amoeba), this protein is Probable glycerol kinase (gk).